Consider the following 266-residue polypeptide: uncharacterized protein (266 aa).

The protein belongs to the chlamydial CPn_0087/CT_309/TC_0583 family.

This is an uncharacterized protein from Chlamydia trachomatis serovar D (strain ATCC VR-885 / DSM 19411 / UW-3/Cx).